The sequence spans 268 residues: Mediator of RNA polymerase II transcription subunit 8-A (268 aa).

Coiled coils occupy residues 1 to 26 and 117 to 160; these read MQRE…KNSL and VEEL…EERE. The interval 190-268 is disordered; sequence GLSNRRPPGQ…KSASMHPYQR (79 aa). A compositionally biased stretch (polar residues) spans 223–246; it reads VPMSLQSNQQQQHMAGVSMSQGNQ.

The protein belongs to the Mediator complex subunit 8 family. As to quaternary structure, component of the Mediator complex. May be part of a multisubunit E3 ubiquitin-protein ligase complex.

The protein localises to the nucleus. It functions in the pathway protein modification; protein ubiquitination. Its function is as follows. Component of the Mediator complex, a coactivator involved in the regulated transcription of nearly all RNA polymerase II-dependent genes. Mediator functions as a bridge to convey information from gene-specific regulatory proteins to the basal RNA polymerase II transcription machinery. Mediator is recruited to promoters by direct interactions with regulatory proteins and serves as a scaffold for the assembly of a functional preinitiation complex with RNA polymerase II and the general transcription factors. May play a role as a target recruitment subunit in E3 ubiquitin-protein ligase complexes and thus in ubiquitination and subsequent proteasomal degradation of target proteins. In Xenopus laevis (African clawed frog), this protein is Mediator of RNA polymerase II transcription subunit 8-A (med8-a).